Consider the following 60-residue polypeptide: Probable tautomerase SP_1017 (60 aa).

Pro2 functions as the Proton acceptor; via imino nitrogen in the catalytic mechanism.

Belongs to the 4-oxalocrotonate tautomerase family.

This Streptococcus pneumoniae serotype 4 (strain ATCC BAA-334 / TIGR4) protein is Probable tautomerase SP_1017.